We begin with the raw amino-acid sequence, 657 residues long: C4-dicarboxylate transport sensor protein DctS (657 aa).

Over 1-26 (MRDTTGGPAGAEVWTVPGLLGARKLD) the chain is Cytoplasmic. Residues 27–51 (LLALIPLVAIVALMTLVGALLFAVA) form a helical membrane-spanning segment. The Periplasmic portion of the chain corresponds to 52 to 252 (QSDANRARAK…AYDAPDAFGN (201 aa)). Residues 253–273 (AALLAAIGALSVFAVLAMVVL) form a helical membrane-spanning segment. Residues 274 to 657 (HRNALRRRMA…LPVPQEGAPA (384 aa)) lie on the Cytoplasmic side of the membrane. In terms of domain architecture, PAS spans 289–361 (AEMAFRRAME…ARQRQLIEGQ (73 aa)). The PAC domain occupies 365 to 417 (QAFETRFRRSDGSEIEVQVFEAPLIDAGGRHRGWMGSVIDITQAKQAARLARA). An inter-domain linker region spans residues 407–422 (QAKQAARLARAQDESL). A Histidine kinase domain is found at 437-652 (TLAHELNQPL…VFTVTLPVPQ (216 aa)). H440 is modified (phosphohistidine; by autocatalysis).

The protein resides in the cell inner membrane. The catalysed reaction is ATP + protein L-histidine = ADP + protein N-phospho-L-histidine.. In terms of biological role, member of the two-component regulatory system DctS/DctR involved in the transport of C4-dicarboxylates. DctS functions as a membrane-associated protein kinase that phosphorylates DctR in response to environmental signals. This is C4-dicarboxylate transport sensor protein DctS (dctS) from Rhodobacter capsulatus (Rhodopseudomonas capsulata).